Consider the following 504-residue polypeptide: MGLCYSVDRTTGKEPGEASSTATTAETVEERSGSGRWRRPRDLKGGGDIEGIPQVLGRLVSNGSSKIACLYTQQGKKGTNQDAMLVFENFCSRDDTVFCGVFDGHGPFGHMVAKKVRDTLPFTLLTQLKMTSESDQSSLVGANGFQIKCTEEEEVQTTESEQVQKTESVTTMDEQWCELNPNVNNDELPEMYLPLKHAMLKSCQQIDKELKMHPTIDCFCSGTTSVTLIKQGEDLVVGNIGDSRAVLATRDEDNALLAVQLTIDLKPDLPGESARIQKCKGRVFALQDEPEVARVWLPNSDSPGLAMARAFGDFCLKDYGLISVPDINYRRLTERDQFIILASDGVWDVLSNKEAVDIVASAPSRSTAARALVDTAVRSWRIKYPTSKNDDCTVVCLFLQDSSVAMEVSTNVKKDSPKEESIESVTNSTSKEEDEIVPVKDEKIPESCGIESKMMTMTLAECISVAQDDEEWSALEGLTRVNSLLSIPRFLSGELRSTSWRKWL.

The tract at residues 1-49 is disordered; it reads MGLCYSVDRTTGKEPGEASSTATTAETVEERSGSGRWRRPRDLKGGGDI. Low complexity predominate over residues 17 to 26; it reads EASSTATTAE. Residues 67–399 enclose the PPM-type phosphatase domain; the sequence is IACLYTQQGK…DDCTVVCLFL (333 aa). Aspartate 103, glycine 104, aspartate 344, and aspartate 390 together coordinate Mn(2+). A disordered region spans residues 410–435; it reads TNVKKDSPKEESIESVTNSTSKEEDE. A compositionally biased stretch (basic and acidic residues) spans 412-421; the sequence is VKKDSPKEES.

Belongs to the PP2C family. It depends on Mg(2+) as a cofactor. Mn(2+) is required as a cofactor.

The enzyme catalyses O-phospho-L-seryl-[protein] + H2O = L-seryl-[protein] + phosphate. The catalysed reaction is O-phospho-L-threonyl-[protein] + H2O = L-threonyl-[protein] + phosphate. The protein is Probable protein phosphatase 2C 18 of Arabidopsis thaliana (Mouse-ear cress).